A 289-amino-acid polypeptide reads, in one-letter code: Extracellular ribonuclease (289 aa).

The N-terminal stretch at 1-24 (MTKKLWFLPIVCLFFILGWTAPSA) is a signal peptide. A propeptide spanning residues 25–51 (SAGAPADTNLYSRLAVSTAGGTTLFPQ) is cleaved from the precursor. The disordered stretch occupies residues 177–197 (FDNGGSEYPKAPGNYYDGDSW).

The protein localises to the secreted. Functionally, mg(2+)-activated ribonuclease which hydrolyzes RNA apparently nonspecifically into oligonucleotides with 5'-terminal phosphate. This chain is Extracellular ribonuclease (bsn), found in Bacillus amyloliquefaciens (Bacillus velezensis).